The primary structure comprises 210 residues: Ribosomal RNA small subunit methyltransferase G (210 aa).

S-adenosyl-L-methionine-binding positions include Gly-76, Leu-81, 127-128 (VE), and Arg-142.

It belongs to the methyltransferase superfamily. RNA methyltransferase RsmG family.

The protein localises to the cytoplasm. The enzyme catalyses guanosine(527) in 16S rRNA + S-adenosyl-L-methionine = N(7)-methylguanosine(527) in 16S rRNA + S-adenosyl-L-homocysteine. In terms of biological role, specifically methylates the N7 position of guanine in position 527 of 16S rRNA. The sequence is that of Ribosomal RNA small subunit methyltransferase G from Aliivibrio fischeri (strain ATCC 700601 / ES114) (Vibrio fischeri).